The sequence spans 715 residues: ATP-binding cassette sub-family B member 10, mitochondrial (715 aa).

The N-terminal 82 residues, 1–82, are a transit peptide targeting the mitochondrion; sequence MRAPSARALL…SSGARRCWVL (82 aa). Residues 83–133 are Mitochondrial matrix-facing; the sequence is AGPRAAHPLFARLQGAAATGVRDLGNDSQRRPAATGRSEVWKLLGLVRPER. A helical membrane pass occupies residues 134–157; sequence GRLSAAVGFLAVSSVITMSAPFFL. The ABC transmembrane type-1 domain maps to 136 to 422; the sequence is LSAAVGFLAV…LSSFYSELMK (287 aa). The Mitochondrial intermembrane segment spans residues 158–178; that stretch reads GRIIDVIYTNPSEGYGDSLTR. Residues 179 to 201 form a helical membrane-spanning segment; sequence LCAVLTCVFLCGAAANGIRVYLM. Topologically, residues 202–252 are mitochondrial matrix; it reads QSSGQSIVNRLRTSLFSSILRQEVAFFDKTRTGELINRLSSDTALLGRSVT. Lys-230 carries the post-translational modification N6-acetyllysine. Residues 253–275 traverse the membrane as a helical segment; sequence ENLSDGLRAGAQASVGVGMMFFV. Topologically, residues 276–278 are mitochondrial intermembrane; sequence SPS. Residues 279–298 traverse the membrane as a helical segment; sequence LATFVLSVVPPISVLAVIYG. Topologically, residues 299–357 are mitochondrial matrix; sequence RYLRKLSKATQDSLAEATQLAEERIGNIRTIRAFGKEMTEVEKYTGRVDQLLQLAQKEA. A helical transmembrane segment spans residues 358–381; that stretch reads LARAGFFGAAGLSGNLIVLSVLYK. Residues 382-395 lie on the Mitochondrial intermembrane side of the membrane; the sequence is GGLLMGSAHMTVGE. A helical transmembrane segment spans residues 396–417; that stretch reads LSSFLMYAFWVGLSIGGLSSFY. The Mitochondrial matrix segment spans residues 418 to 715; the sequence is SELMKGLGAG…AEQFLEPARA (298 aa). Residues 457 to 696 enclose the ABC transporter domain; that stretch reads LEFRNVHFTY…PNGLYRKLMN (240 aa). ATP-binding residues include Gly-495, Gly-497, Lys-498, Ser-499, and Thr-500. Position 499 (Ser-499) interacts with Mg(2+). Cys-547 carries the S-glutathionyl cysteine modification. Residue Asp-623 coordinates Mg(2+).

The protein belongs to the ABC transporter superfamily. ABCB family. Mitochondrial peptide exporter (TC 3.A.1.212) subfamily. Homodimer or homooligomer. Interacts with PAAT; this interaction regulates ABCB10. Interacts with SLC25A37; this interaction stabilizes SLC25A37 and enhances the function of SLC25A37 to import mitochondrial iron during erythroid differentiation. Interacts with FECH; this interaction may allow the formation of the oligomeric complex with SLC25A37. Forms a complex with ABCB7 and FECH, where a dimeric FECH bridges ABCB7 and ABCB10 homodimers; this complex may be required for cellular iron homeostasis, mitochondrial function and heme biosynthesis. As to expression, expressed at particularly high levels in fetal liver, and erythroid tissues of embryos and adults. Found also in adult bone marrow, liver and kidney, and at lower levels in heart, brain and spleen.

It is found in the mitochondrion inner membrane. It carries out the reaction biliverdin IXalpha(in) + ATP + H2O = biliverdin IXalpha(out) + ADP + phosphate + H(+). With respect to regulation, oxidized glutathione (GSSG) stimulates ATP hydrolysis without affecting ATP binding, whereas reduced glutathione (GSH) inhibits ATP binding and hydrolysis. Its function is as follows. ATP-dependent transporter located in the mitochondrial inner membrane that catalyzes the export of biliverdin from the mitochondrial matrix, and plays a crucial role in hemoglobin synthesis and antioxidative stress. Participates in the early step of the heme biosynthetic process during insertion of iron into protoporphyrin IX (PPIX). Involved in the stabilization of the iron transporter mitoferrin-1/SLC25A37. In addition may be involved in mitochondrial unfolded protein response (UPRmt) signaling pathway, although ABCB10 probably does not participate in peptide export from mitochondria. This is ATP-binding cassette sub-family B member 10, mitochondrial from Mus musculus (Mouse).